The chain runs to 342 residues: uncharacterized protein (342 aa).

The Nudix hydrolase domain maps to 155–309 (TYGIHINGYV…KPNCALVMVD (155 aa)).

This is an uncharacterized protein from Saccharomyces cerevisiae (strain ATCC 204508 / S288c) (Baker's yeast).